A 227-amino-acid polypeptide reads, in one-letter code: Phosphatidate cytidylyltransferase (227 aa).

6 consecutive transmembrane segments (helical) span residues 31 to 51 (FVIA…LVGM), 65 to 85 (IPYL…LTFL), 93 to 113 (WLIM…MIGG), 131 to 151 (WSGL…ASFI), 165 to 185 (IYLF…DLFI), and 206 to 226 (GVLD…FISI).

The protein belongs to the CDS family.

It localises to the cell membrane. The enzyme catalyses a 1,2-diacyl-sn-glycero-3-phosphate + CTP + H(+) = a CDP-1,2-diacyl-sn-glycerol + diphosphate. Its pathway is phospholipid metabolism; CDP-diacylglycerol biosynthesis; CDP-diacylglycerol from sn-glycerol 3-phosphate: step 3/3. The sequence is that of Phosphatidate cytidylyltransferase (cdsA) from Rickettsia felis (strain ATCC VR-1525 / URRWXCal2) (Rickettsia azadi).